Here is a 235-residue protein sequence, read N- to C-terminus: FsC-acetyl coenzyme A-N(2)-transacetylase (235 aa).

The 177-residue stretch at 14–190 folds into the N-acetyltransferase domain; it reads LELVPLGHEH…RYSITREEWL (177 aa). CoA-binding positions include 106 to 108, G114, N146, and 151 to 153; these read FRV and AVM.

Its pathway is siderophore biosynthesis. Functionally, fsC-acetyl coenzyme A-N(2)-transacetylase; part of the siderophore biosynthetic pathway. Aspergillus fumigatus produces 4 types of siderophores, low-molecular-mass iron chelators, including excreted fusarinine C (FsC) and triacetylfusarinine C (TAFC) for iron uptake and intacellular ferricrocin (FC) for hyphal and hydroxyferricrocin (HFC) for conidial iron distribution and storage. TAFC consists of 3 N(2)-acetyl-N(5)-anhydromevalonyl-N(5)-hydroxyornithine residues cyclically linked by ester bonds; FC is a cyclic hexapeptide with the structure Gly-Ser-Gly-(N(5)-acetyl-N(5)-hydroxyornithine)x3. The biosynthesis of all four siderophores depends on the hydroxylation of ornithine, catalyzed by the monooxygenase sidA. Subsequently, the pathways for biosynthesis of extra- and intracellular siderophores split. For biosynthesis of extracellular siderophores, the transacylase sidF transfers anhydromevalonyl to N(5)-hydroxyornithine. The required anhydromevalonyl-CoA moiety is derived from mevalonate by CoA ligation and dehydration catalyzed by sidI and sidH respectively. The acetylation of N(5)-hydroxyornithine for FC biosynthesis involves the constitutively expressed sidL. FC is hydroxylated to HFC by an as yet uncharacterized enzyme during conidiation. Assembly of fusarinine C (FsC) and FC is catalyzed by two different nonribosomal peptide synthetases (NRPS), sidD and sidC respectively. Subsequently, sidG catalyzes N2-acetylation of FsC for forming TAFC. Both extra- and intracellular siderophores are crucial for growth during iron limitation and virulence. This Aspergillus fumigatus (strain ATCC MYA-4609 / CBS 101355 / FGSC A1100 / Af293) (Neosartorya fumigata) protein is FsC-acetyl coenzyme A-N(2)-transacetylase.